Reading from the N-terminus, the 122-residue chain is Large ribosomal subunit protein uL14 (122 aa).

Belongs to the universal ribosomal protein uL14 family. Part of the 50S ribosomal subunit. Forms a cluster with proteins L3 and L19. In the 70S ribosome, L14 and L19 interact and together make contacts with the 16S rRNA in bridges B5 and B8.

Binds to 23S rRNA. Forms part of two intersubunit bridges in the 70S ribosome. The polypeptide is Large ribosomal subunit protein uL14 (Stenotrophomonas maltophilia (strain R551-3)).